The sequence spans 198 residues: Holliday junction branch migration complex subunit RuvA (198 aa).

The segment at 1 to 63 is domain I; sequence MYDYIKGQLT…EDAHLLFGFH (63 aa). Residues 64–142 form a domain II region; sequence TEDEKDVFLK…EAPQETGHTK (79 aa). Residues 143-147 form a flexible linker region; the sequence is ARSNK. Positions 148–198 are domain III; sequence AGNTQLDEAIEALLALGYKATELKKIRAFFEGTSETAEQYIKSALKLLMKG.

It belongs to the RuvA family. As to quaternary structure, homotetramer. Forms an RuvA(8)-RuvB(12)-Holliday junction (HJ) complex. HJ DNA is sandwiched between 2 RuvA tetramers; dsDNA enters through RuvA and exits via RuvB. An RuvB hexamer assembles on each DNA strand where it exits the tetramer. Each RuvB hexamer is contacted by two RuvA subunits (via domain III) on 2 adjacent RuvB subunits; this complex drives branch migration. In the full resolvosome a probable DNA-RuvA(4)-RuvB(12)-RuvC(2) complex forms which resolves the HJ.

Its subcellular location is the cytoplasm. In terms of biological role, the RuvA-RuvB-RuvC complex processes Holliday junction (HJ) DNA during genetic recombination and DNA repair, while the RuvA-RuvB complex plays an important role in the rescue of blocked DNA replication forks via replication fork reversal (RFR). RuvA specifically binds to HJ cruciform DNA, conferring on it an open structure. The RuvB hexamer acts as an ATP-dependent pump, pulling dsDNA into and through the RuvAB complex. HJ branch migration allows RuvC to scan DNA until it finds its consensus sequence, where it cleaves and resolves the cruciform DNA. The polypeptide is Holliday junction branch migration complex subunit RuvA (Streptococcus pyogenes serotype M6 (strain ATCC BAA-946 / MGAS10394)).